A 451-amino-acid chain; its full sequence is Phosphoglucosamine mutase (451 aa).

Serine 101 acts as the Phosphoserine intermediate in catalysis. Mg(2+)-binding residues include serine 101, aspartate 240, aspartate 242, and aspartate 244. Position 101 is a phosphoserine (serine 101).

This sequence belongs to the phosphohexose mutase family. Mg(2+) serves as cofactor. Activated by phosphorylation.

It catalyses the reaction alpha-D-glucosamine 1-phosphate = D-glucosamine 6-phosphate. In terms of biological role, catalyzes the conversion of glucosamine-6-phosphate to glucosamine-1-phosphate. In Streptococcus pyogenes serotype M18 (strain MGAS8232), this protein is Phosphoglucosamine mutase.